Reading from the N-terminus, the 184-residue chain is Photosystem I assembly protein Ycf4 (184 aa).

Transmembrane regions (helical) follow at residues 21–43 and 63–85; these read NFCW…ISSY and GLVM…CAIS.

This sequence belongs to the Ycf4 family.

The protein resides in the plastid. Its subcellular location is the chloroplast thylakoid membrane. Its function is as follows. Seems to be required for the assembly of the photosystem I complex. The chain is Photosystem I assembly protein Ycf4 from Spinacia oleracea (Spinach).